Consider the following 206-residue polypeptide: uncharacterized protein (206 aa).

Residues 1-17 (MKGKILFALFLSAGVIA) form the signal peptide. Cys-18 carries the N-palmitoyl cysteine lipid modification. Residue Cys-18 is the site of S-diacylglycerol cysteine attachment. Residues 21 to 58 (ASQAAKQQEVKVAKAETKTKKKESKAEKFRKALAAQDK) adopt a coiled-coil conformation. Residues 97–201 (GDWRKGESLA…DIVAYLHDPE (105 aa)) form the Cytochrome c domain. 3 residues coordinate heme c: Cys-127, Cys-130, and His-131.

Its subcellular location is the cell membrane. This is an uncharacterized protein from Aquifex aeolicus (strain VF5).